A 228-amino-acid polypeptide reads, in one-letter code: Protein slowmo homolog (228 aa).

Residues 1–172 (MPLFETIKHT…TIIKVQKEAE (172 aa)) form the PRELI/MSF1 domain.

It belongs to the slowmo family.

In Dictyostelium discoideum (Social amoeba), this protein is Protein slowmo homolog (slmo).